The following is an 864-amino-acid chain: Sine oculis-binding protein homolog (864 aa).

The segment covering 1 to 14 has biased composition (basic and acidic residues); that stretch reads MAEMEKEGRPPENK. Residues 1–25 are disordered; that stretch reads MAEMEKEGRPPENKRSRKPAHPVKR. 2 consecutive FCS-type zinc fingers follow at residues 142–180 and 216–256; these read DEVS…KCFA and FKNN…KCLN. 3 disordered regions span residues 304 to 360, 413 to 484, and 550 to 616; these read LTDA…ETPS, RGPP…PGAP, and KPPN…RGRG. 2 stretches are compositionally biased toward low complexity: residues 314-335 and 417-433; these read PVAA…VSPS and HHAS…MLPG. Pro residues predominate over residues 460–484; sequence IHPPSTPTMPGNPPGLLPPPPPGAP. Composition is skewed to low complexity over residues 565-582 and 590-603; these read SAPG…GRSL and GSSK…GSSG. The short motif at 618-622 is the SUMO interaction motif 1 (SIM); mediates the binding to polysumoylated substrates element; sequence VVDLT. Serine 627 bears the Phosphoserine mark. The SUMO interaction motif 2 (SIM); mediates the binding to polysumoylated substrates signature appears at 648–652; that stretch reads VIDLT. Lysine 672 participates in a covalent cross-link: Glycyl lysine isopeptide (Lys-Gly) (interchain with G-Cter in SUMO2). Position 694 is a phosphoserine (serine 694). The tract at residues 725 to 750 is disordered; it reads APAEAKGAEPPPEQPPPPAPPKKLLS. Over residues 733–745 the composition is skewed to pro residues; the sequence is EPPPEQPPPPAPP.

This sequence belongs to the SOBP family. In terms of assembly, interacts (via SIM domains) with SUMO1 and SUMO2.

Implicated in development of the cochlea. This is Sine oculis-binding protein homolog from Rattus norvegicus (Rat).